We begin with the raw amino-acid sequence, 86 residues long: YcgL domain-containing protein XOO0428 (86 aa).

In terms of domain architecture, YcgL spans 1–83 (MHAYVYKSQR…PKTRVLAGEC (83 aa)).

The sequence is that of YcgL domain-containing protein XOO0428 from Xanthomonas oryzae pv. oryzae (strain MAFF 311018).